The chain runs to 330 residues: Malate dehydrogenase (330 aa).

NAD(+) is bound at residue 12 to 18 (GAAGQIG). Residues R93 and R99 each coordinate substrate. Residues N106, Q113, and 130 to 132 (VGN) each bind NAD(+). Residues N132 and R163 each coordinate substrate. Catalysis depends on H188, which acts as the Proton acceptor.

The protein belongs to the LDH/MDH superfamily. MDH type 2 family.

It carries out the reaction (S)-malate + NAD(+) = oxaloacetate + NADH + H(+). Its function is as follows. Catalyzes the reversible oxidation of malate to oxaloacetate. In Legionella pneumophila subsp. pneumophila (strain Philadelphia 1 / ATCC 33152 / DSM 7513), this protein is Malate dehydrogenase.